The primary structure comprises 399 residues: Keratin, type I cytoskeletal 19 (399 aa).

Residues 1–78 (MTSYSYRQSS…ATSDGLLAGN (78 aa)) form a head region. Position 7 is an omega-N-methylarginine (arginine 7). Residues serine 14 and serine 22 each carry the phosphoserine modification. Arginine 24 is modified (asymmetric dimethylarginine; alternate). Arginine 24 carries the omega-N-methylarginine; alternate modification. Arginine 32 is modified (omega-N-methylarginine). Residues serine 35 and serine 40 each carry the phosphoserine modification. An omega-N-methylarginine mark is found at arginine 43 and arginine 51. Residues serine 57 and serine 71 each carry the phosphoserine modification. Positions 79–114 (EKLTMQNLNDRLASYLEKVRALEEANGDLEVKIRDW) are coil 1A. In terms of domain architecture, IF rod spans 79-390 (EKLTMQNLND…NLLEGQDAYF (312 aa)). Positions 115 to 132 (YQKQGPGPARDYSHYFKT) are linker 1. Residues 133–224 (IEDLRDQILG…KNHEEEMSVL (92 aa)) form a coil 1B region. Residues 225–247 (KGQVGGQVSVEVDSAPGIDLAKI) are linker 12. The tract at residues 243–389 (DLAKILSDMR…RNLLEGQDAY (147 aa)) is necessary for interaction with PNN. Positions 248 to 386 (LSDMRSQYEV…ATYRNLLEGQ (139 aa)) are coil 2. Threonine 322 bears the Phosphothreonine mark. Positions 387-399 (DAYFNDLSLAKAL) are rod-like helical tail. Serine 394 bears the Phosphoserine mark.

Belongs to the intermediate filament family. In terms of assembly, heterotetramer of two type I and two type II keratins. Interacts with PNN and the actin-binding domain of DMD.

Its function is as follows. Involved in the organization of myofibers. Together with KRT8, helps to link the contractile apparatus to dystrophin at the costameres of striated muscle. The chain is Keratin, type I cytoskeletal 19 (KRT19) from Bos taurus (Bovine).